The following is a 512-amino-acid chain: NAD(P)H-quinone oxidoreductase subunit 2, organellar chromatophore (512 aa).

14 helical membrane-spanning segments follow: residues 6–26 (LLALPLNAATIVPEGAILLAL), 43–63 (WVPPICYAGLGSALILLASQW), 80–100 (LAIAFRAIIATSTLFSLMISW), 107–127 (GAPMGEYAAILLAATLGAMFL), 133–153 (LVSIFVSLETLSVSSYLLAGY), 168–188 (LLVGSATAAVFLYGASLLYGL), 210–230 (AALALVFVLATVAFKIAAVPF), 242–262 (PTPIVAFLSVGSKTAGFALAL), 276–296 (WKFLFSLLAILSMVLGNIVAL), 304–324 (MLAYSSIGQAGFVMIGLVCGT), 332–352 (ILYLATYLFMNMGAFACVILF), 376–396 (IGLSLCLLSLGGIPPMLGFFG), 411–431 (LLVVTGLITSVVSIYYYISVI), and 464–484 (VALLVCVIVTGIGGIFSNPLF).

The protein belongs to the complex I subunit 2 family. NDH-1 can be composed of about 15 different subunits; different subcomplexes with different compositions have been identified which probably have different functions.

The protein localises to the plastid. Its subcellular location is the organellar chromatophore thylakoid membrane. The catalysed reaction is a plastoquinone + NADH + (n+1) H(+)(in) = a plastoquinol + NAD(+) + n H(+)(out). It catalyses the reaction a plastoquinone + NADPH + (n+1) H(+)(in) = a plastoquinol + NADP(+) + n H(+)(out). Functionally, NDH-1 shuttles electrons from an unknown electron donor, via FMN and iron-sulfur (Fe-S) centers, to quinones in the respiratory and/or the photosynthetic chain. The immediate electron acceptor for the enzyme in this species is believed to be plastoquinone. Couples the redox reaction to proton translocation, and thus conserves the redox energy in a proton gradient. Cyanobacterial NDH-1 also plays a role in inorganic carbon-concentration. The protein is NAD(P)H-quinone oxidoreductase subunit 2, organellar chromatophore of Paulinella chromatophora.